The chain runs to 313 residues: Glycine--tRNA ligase alpha subunit (313 aa).

Belongs to the class-II aminoacyl-tRNA synthetase family. In terms of assembly, tetramer of two alpha and two beta subunits.

The protein resides in the cytoplasm. It catalyses the reaction tRNA(Gly) + glycine + ATP = glycyl-tRNA(Gly) + AMP + diphosphate. The protein is Glycine--tRNA ligase alpha subunit of Leuconostoc mesenteroides subsp. mesenteroides (strain ATCC 8293 / DSM 20343 / BCRC 11652 / CCM 1803 / JCM 6124 / NCDO 523 / NBRC 100496 / NCIMB 8023 / NCTC 12954 / NRRL B-1118 / 37Y).